Here is a 164-residue protein sequence, read N- to C-terminus: 6,7-dimethyl-8-ribityllumazine synthase (164 aa).

Residues F28, 62 to 64 (ALE), and 86 to 88 (AVI) each bind 5-amino-6-(D-ribitylamino)uracil. Residue 91–92 (ET) participates in (2S)-2-hydroxy-3-oxobutyl phosphate binding. H94 serves as the catalytic Proton donor. N119 contacts 5-amino-6-(D-ribitylamino)uracil. R133 is a (2S)-2-hydroxy-3-oxobutyl phosphate binding site.

This sequence belongs to the DMRL synthase family.

It catalyses the reaction (2S)-2-hydroxy-3-oxobutyl phosphate + 5-amino-6-(D-ribitylamino)uracil = 6,7-dimethyl-8-(1-D-ribityl)lumazine + phosphate + 2 H2O + H(+). The protein operates within cofactor biosynthesis; riboflavin biosynthesis; riboflavin from 2-hydroxy-3-oxobutyl phosphate and 5-amino-6-(D-ribitylamino)uracil: step 1/2. Functionally, catalyzes the formation of 6,7-dimethyl-8-ribityllumazine by condensation of 5-amino-6-(D-ribitylamino)uracil with 3,4-dihydroxy-2-butanone 4-phosphate. This is the penultimate step in the biosynthesis of riboflavin. This Nitrosomonas europaea (strain ATCC 19718 / CIP 103999 / KCTC 2705 / NBRC 14298) protein is 6,7-dimethyl-8-ribityllumazine synthase.